Consider the following 77-residue polypeptide: MELVLGLKYIAVALLIGFGAIGTAVGFGNMGGKFLEACARQPELAPSLQVKMFILAGLIDAVAMIGVGIAMVLLFVL.

The next 2 membrane-spanning stretches (helical) occupy residues 10–30 (IAVA…FGNM) and 57–77 (GLID…LFVL).

This sequence belongs to the ATPase C chain family. F-type ATPases have 2 components, F(1) - the catalytic core - and F(0) - the membrane proton channel. F(1) has five subunits: alpha(3), beta(3), gamma(1), delta(1), epsilon(1). F(0) has three main subunits: a(1), b(2) and c(10-14). The alpha and beta chains form an alternating ring which encloses part of the gamma chain. F(1) is attached to F(0) by a central stalk formed by the gamma and epsilon chains, while a peripheral stalk is formed by the delta and b chains.

It localises to the cell inner membrane. Functionally, f(1)F(0) ATP synthase produces ATP from ADP in the presence of a proton or sodium gradient. F-type ATPases consist of two structural domains, F(1) containing the extramembraneous catalytic core and F(0) containing the membrane proton channel, linked together by a central stalk and a peripheral stalk. During catalysis, ATP synthesis in the catalytic domain of F(1) is coupled via a rotary mechanism of the central stalk subunits to proton translocation. Its function is as follows. Key component of the F(0) channel; it plays a direct role in translocation across the membrane. A homomeric c-ring of between 10-14 subunits forms the central stalk rotor element with the F(1) delta and epsilon subunits. This chain is ATP synthase subunit c, found in Pseudoalteromonas translucida (strain TAC 125).